Here is a 96-residue protein sequence, read N- to C-terminus: Co-chaperonin GroES (96 aa).

Belongs to the GroES chaperonin family. As to quaternary structure, heptamer of 7 subunits arranged in a ring. Interacts with the chaperonin GroEL.

The protein resides in the cytoplasm. Its function is as follows. Together with the chaperonin GroEL, plays an essential role in assisting protein folding. The GroEL-GroES system forms a nano-cage that allows encapsulation of the non-native substrate proteins and provides a physical environment optimized to promote and accelerate protein folding. GroES binds to the apical surface of the GroEL ring, thereby capping the opening of the GroEL channel. The protein is Co-chaperonin GroES of Geotalea uraniireducens (strain Rf4) (Geobacter uraniireducens).